The sequence spans 597 residues: 2-isopropylmalate synthase (597 aa).

A unknown region spans residues 1-80 (MQLDIDRLVA…QKNESLERTE (80 aa)). One can recognise a Pyruvate carboxyltransferase domain in the interval 87–349 (VIIFDTTLRD…ETGIDTTQIV (263 aa)). The segment at 87–349 (VIIFDTTLRD…ETGIDTTQIV (263 aa)) is 2-isopropylmalate synthase. Mn(2+) is bound by residues D96, H284, H286, and N320. The regulatory domain stretch occupies residues 475 to 597 (KFISQKISTE…KPKAQGSGTI (123 aa)).

The protein belongs to the alpha-IPM synthase/homocitrate synthase family. LeuA type 1 subfamily. As to quaternary structure, homodimer. It depends on Mn(2+) as a cofactor.

The protein resides in the cytoplasm. It carries out the reaction 3-methyl-2-oxobutanoate + acetyl-CoA + H2O = (2S)-2-isopropylmalate + CoA + H(+). Its pathway is amino-acid biosynthesis; L-leucine biosynthesis; L-leucine from 3-methyl-2-oxobutanoate: step 1/4. Its function is as follows. Catalyzes the condensation of the acetyl group of acetyl-CoA with 3-methyl-2-oxobutanoate (2-ketoisovalerate) to form 3-carboxy-3-hydroxy-4-methylpentanoate (2-isopropylmalate). The polypeptide is 2-isopropylmalate synthase (Neisseria gonorrhoeae (strain ATCC 700825 / FA 1090)).